The primary structure comprises 262 residues: Hydroxyethylthiazole kinase (262 aa).

Position 41 (M41) interacts with substrate. 2 residues coordinate ATP: R117 and S163. G190 contacts substrate.

The protein belongs to the Thz kinase family. Mg(2+) serves as cofactor.

The catalysed reaction is 5-(2-hydroxyethyl)-4-methylthiazole + ATP = 4-methyl-5-(2-phosphooxyethyl)-thiazole + ADP + H(+). The protein operates within cofactor biosynthesis; thiamine diphosphate biosynthesis; 4-methyl-5-(2-phosphoethyl)-thiazole from 5-(2-hydroxyethyl)-4-methylthiazole: step 1/1. In terms of biological role, catalyzes the phosphorylation of the hydroxyl group of 4-methyl-5-beta-hydroxyethylthiazole (THZ). The sequence is that of Hydroxyethylthiazole kinase from Levilactobacillus brevis (strain ATCC 367 / BCRC 12310 / CIP 105137 / JCM 1170 / LMG 11437 / NCIMB 947 / NCTC 947) (Lactobacillus brevis).